The following is a 24-amino-acid chain: Prokineticin 1-like protein (24 aa).

C7 and C19 are joined by a disulfide.

As to expression, expressed by the skin glands.

It localises to the secreted. Its function is as follows. Stimulates insulin secretion by BRIN-BD11 cells in vitro. The protein is Prokineticin 1-like protein of Pelophylax saharicus (Sahara frog).